The following is a 469-amino-acid chain: Phosphoenolpyruvate carboxylase (469 aa).

This sequence belongs to the PEPCase type 2 family. Homotetramer. Mg(2+) serves as cofactor.

It carries out the reaction oxaloacetate + phosphate = phosphoenolpyruvate + hydrogencarbonate. Catalyzes the irreversible beta-carboxylation of phosphoenolpyruvate (PEP) to form oxaloacetate (OAA), a four-carbon dicarboxylic acid source for the tricarboxylic acid cycle. This chain is Phosphoenolpyruvate carboxylase, found in Pyrococcus horikoshii (strain ATCC 700860 / DSM 12428 / JCM 9974 / NBRC 100139 / OT-3).